Here is a 376-residue protein sequence, read N- to C-terminus: Cytochrome b (376 aa).

4 helical membrane-spanning segments follow: residues 28–48, 72–94, 107–127, and 169–189; these read YGFL…FLAS, WCFR…LHIL, SWIS…VGYV, and FFVL…IHIF. 2 residues coordinate heme b: H78 and H92. Heme b-binding residues include H173 and H187. H192 lines the a ubiquinone pocket. Transmembrane regions (helical) follow at residues 214–234, 274–294, 317–337, and 340–360; these read LLSL…IQSL, VPSK…LFLL, VPII…CQLP, and IFIL…LFVL.

This sequence belongs to the cytochrome b family. The main subunits of complex b-c1 are: cytochrome b, cytochrome c1 and the Rieske protein. The cofactor is heme b.

The protein resides in the mitochondrion inner membrane. Its function is as follows. Component of the ubiquinol-cytochrome c reductase complex (complex III or cytochrome b-c1 complex) that is part of the mitochondrial respiratory chain. The b-c1 complex mediates electron transfer from ubiquinol to cytochrome c. Contributes to the generation of a proton gradient across the mitochondrial membrane that is then used for ATP synthesis. In Plasmodium falciparum, this protein is Cytochrome b (MT-CYB).